Reading from the N-terminus, the 334-residue chain is Glycosylinositol phosphorylceramide mannosyl transferase 1 (334 aa).

The Cytoplasmic segment spans residues 1-26; the sequence is MGGGEVSKEMGACSLAYRRGDQKLRK. A helical; Signal-anchor for type II membrane protein membrane pass occupies residues 27–49; it reads FVTARSTKFLLFCCIAFVLVTIV. At 50 to 334 the chain is on the lumenal side; the sequence is CRSSRPWVNS…AVDSRNLWFW (285 aa). N-linked (GlcNAc...) asparagine glycosylation is present at Asn-58. Substrate is bound by residues 145-150, 166-168, Arg-196, and 258-262; these read DSLNNR, DDD, and RNCED. Position 168 (Asp-168) interacts with Mn(2+). The cysteines at positions 260 and 305 are disulfide-linked. Asp-262 is a catalytic residue. N-linked (GlcNAc...) asparagine glycosylation is present at Asn-271. Residues 289 to 302 and 292 to 302 contribute to the substrate site; these read STGISSIGGHTEKR and ISSIGGHTEKR.

Belongs to the glycosyltransferase 64 family. It depends on Mn(2+) as a cofactor. Expressed in leaves, roots, stem, and flowers.

It localises to the golgi apparatus membrane. Its pathway is protein modification; protein glycosylation. The protein operates within sphingolipid metabolism. Functionally, mannosyl transferase (ManT) required for the biosynthesis of mannose-carrying glycosylinositol phosphorylceramides (GIPCs). Maybe involved in cell-cell adhesion that maintains the integrity of organs by providing mechanical strength and facilitating the movement of metabolites throughout the plant during development. Prevents abscisic acid- (ABA-) mediated effects on development (e.g. cell size, flowering time, senescence). Probably implicated in beta-(1,4)-galactan biosynthesis thus being a cell-wall synthesis-related (CWSR) protein. This chain is Glycosylinositol phosphorylceramide mannosyl transferase 1, found in Arabidopsis thaliana (Mouse-ear cress).